The following is a 1717-amino-acid chain: PH domain leucine-rich repeat-containing protein phosphatase 1 (1717 aa).

M1 carries the N-acetylmethionine modification. 4 disordered regions span residues 1 to 25 (MEPA…SAPA), 41 to 118 (LAAA…GANS), 136 to 156 (AASS…GAAG), and 252 to 470 (PGAA…PPPT). Over residues 98-110 (APQPIAGGAAPVP) the composition is skewed to low complexity. Residues 262 to 274 (EPPPEAGPRLAPP) show a composition bias toward pro residues. Composition is skewed to low complexity over residues 313–325 (SRRA…DSSP) and 333–345 (PVSS…PVVS). S317 bears the Phosphoserine mark. 2 stretches are compositionally biased toward polar residues: residues 346–358 (DTES…SAES) and 408–417 (QTASSPQPQQ). A Phosphoserine modification is found at S412. A PH domain is found at 536 to 636 (RIQLSGMYNV…WLRQVSKVAS (101 aa)). 21 LRR repeats span residues 638–659 (RISS…LFYS), 661–682 (DLTH…PAAR), 692–712 (KLKS…AVCS), 715–736 (TLAE…VGVM), 738–760 (NLQT…ENMK), 761–783 (QLSY…EKLT), 784–804 (AVDK…QALR), 808–831 (HIKH…DFLQ), 832–853 (HVTQ…IFNN), 873–894 (FLKA…PVPN), 895–916 (YLSY…VCES), 918–939 (KLEV…LFCN), 941–962 (SLRK…LERT), 963–984 (SVEV…LLMK), 987–1008 (SLRF…TLSE), 1013–1033 (ILQE…PLLT), 1037–1058 (HLKI…KMAK), 1061–1082 (ELEE…IMNC), 1084–1105 (RMHT…MQLP), 1106–1127 (EIKC…ENLP), and 1129–1150 (KLQE…TLEL). Residues 1076–1205 (PTTIMNCRRM…NNFCDNREAL (130 aa)) form an interaction with NHERF1 region. One can recognise a PPM-type phosphatase domain in the interval 1175-1422 (SHGYTEASGV…DSISAVVVQL (248 aa)). Mn(2+) contacts are provided by D1210, G1211, K1374, and D1413. 2 disordered regions span residues 1458–1510 (DRPS…SPAY) and 1673–1717 (EVKE…DTPL). Positions 1468–1489 (SSSSGMASEISSELSTSEMSSE) are enriched in low complexity. The PDZ-binding; required for interaction with NHERF1 signature appears at 1715 to 1717 (TPL).

Interacts with the nucleotide free form of K-Ras (KRAS) via its LRR repeats. Interacts with AKT2, AKT3, PRKCB isoform beta-II, STK4, RPS6KB1, RAF1. Isoform 1 (predominantly) and isoform 2 interact with BRAP. Interacts with FKBP5; FKBP5 acts as a scaffold for PHLPP1 and Akt. Interacts with SCRIB; SCRIB acts as a scaffold for PHLPP1 and Akt. Interacts with NHERF1; NHERF1 scaffolds a heterotrimeric complex with PTEN at the plasma membrane. Interacts with WDR48 and USP12. Mn(2+) serves as cofactor. In colorectal cancer tissue, expression is highest in the surface epithelium of normal colonic mucosa adjacent to the cancer tissue but is largely excluded from the crypt bases. Expression is lost or significantly decreased in 78% of tested tumors (at protein level). Ubiquitously expressed in non-cancerous tissues.

The protein localises to the cytoplasm. It is found in the membrane. It localises to the nucleus. The protein resides in the cell membrane. It carries out the reaction O-phospho-L-seryl-[protein] + H2O = L-seryl-[protein] + phosphate. The catalysed reaction is O-phospho-L-threonyl-[protein] + H2O = L-threonyl-[protein] + phosphate. Its activity is regulated as follows. Insensitive to okadaic acid. Deubiquitination by WDR48-USP12 complex positively regulates PHLPP1 stability. Protein phosphatase involved in regulation of Akt and PKC signaling. Mediates dephosphorylation in the C-terminal domain hydrophobic motif of members of the AGC Ser/Thr protein kinase family; specifically acts on 'Ser-473' of AKT2 and AKT3, 'Ser-660' of PRKCB and 'Ser-657' of PRKCA. Isoform 2 seems to have a major role in regulating Akt signaling in hippocampal neurons. Akt regulates the balance between cell survival and apoptosis through a cascade that primarily alters the function of transcription factors that regulate pro- and antiapoptotic genes. Dephosphorylation of 'Ser-473' of Akt triggers apoptosis and suppression of tumor growth. Dephosphorylation of PRKCA and PRKCB leads to their destabilization and degradation. Dephosphorylates STK4 on 'Thr-387' leading to STK4 activation and apoptosis. Dephosphorylates RPS6KB1 and is involved in regulation of cap-dependent translation. Inhibits cancer cell proliferation and may act as a tumor suppressor. Dephosphorylates RAF1 inhibiting its kinase activity. May act as a negative regulator of K-Ras signaling in membrane rafts. Involved in the hippocampus-dependent long-term memory formation. Involved in circadian control by regulating the consolidation of circadian periodicity after resetting. Involved in development and function of regulatory T-cells. In Homo sapiens (Human), this protein is PH domain leucine-rich repeat-containing protein phosphatase 1 (PHLPP1).